Reading from the N-terminus, the 1679-residue chain is Furin-like protease 2 (1679 aa).

A compositionally biased stretch (polar residues) spans 1 to 10 (MSNTTRSSRV). Positions 1-42 (MSNTTRSSRVTIGRIGTTPQITDPWSSGLEKQRPSRCGGPKS) are disordered. N-linked (GlcNAc...) asparagine glycans are attached at residues N3, N109, and N130. The tract at residues 139-164 (VSSLHSSRRTNPPSSSSSSSSNVDVD) is disordered. Positions 147 to 160 (RTNPPSSSSSSSSN) are enriched in low complexity. N-linked (GlcNAc...) asparagine glycosylation is present at N205. The Peptidase S8 domain maps to 383-705 (QWYLNGGAKD…YGLMDAGAMV (323 aa)). The active-site Charge relay system is D417. Residues 424 to 456 (HPDLAQNYDPEASFDINGNDSDPTPQDNGDNKH) are disordered. Over residues 439–451 (INGNDSDPTPQDN) the composition is skewed to polar residues. N-linked (GlcNAc...) asparagine glycosylation occurs at N442. The active-site Charge relay system is H456. Cystine bridges form between C473–C629 and C565–C595. N-linked (GlcNAc...) asparagine glycosylation occurs at N480. S637 (charge relay system) is an active-site residue. One can recognise a P/Homo B domain in the interval 714 to 852 (VPPQHICKSR…QLIFYGTSTQ (139 aa)). An intrachain disulfide couples C720 to C748. N927 carries an N-linked (GlcNAc...) asparagine glycan. FU repeat units lie at residues 961–1006 (KKIL…RSFP), 1009–1056 (VGIC…GYFE), 1060–1104 (NRTC…DTYE), 1107–1152 (DNKC…GFYA), 1156–1204 (RLEC…SEFY), 1208–1253 (EGQC…GFFV), 1256–1299 (GSLC…GYYS), 1301–1346 (RGIC…GFYK), 1348–1393 (DFGC…QYYD), and 1396–1443 (SATC…QTLA). N1060 is a glycosylation site (N-linked (GlcNAc...) asparagine). Residue N1181 is glycosylated (N-linked (GlcNAc...) asparagine). 2 N-linked (GlcNAc...) asparagine glycosylation sites follow: N1274 and N1277. A glycan (N-linked (GlcNAc...) asparagine) is linked at N1439. Residues 1512 to 1532 (AIAVAICLLIITIFSIIFAVL) form a helical membrane-spanning segment. Residues 1533–1679 (QRNSNHVSRN…STTSRTNIRS (147 aa)) lie on the Cytoplasmic side of the membrane. Positions 1660–1679 (TNAERKNHPSSTTSRTNIRS) are disordered. Polar residues predominate over residues 1668–1679 (PSSTTSRTNIRS).

This sequence belongs to the peptidase S8 family. Furin subfamily. Ca(2+) serves as cofactor. Transient expression in a subset of central nervous system neurons during embryonic stages 12-13. Expression in developing tracheal tree from stage 13 to end of embryonic development.

It is found in the membrane. It catalyses the reaction Release of mature proteins from their proproteins by cleavage of -Arg-Xaa-Yaa-Arg-|-Zaa- bonds, where Xaa can be any amino acid and Yaa is Arg or Lys. Releases albumin, complement component C3 and von Willebrand factor from their respective precursors.. Its function is as follows. Furin is likely to represent the ubiquitous endoprotease activity within constitutive secretory pathways and capable of cleavage at the RX(K/R)R consensus motif. This is Furin-like protease 2 (Fur2) from Drosophila melanogaster (Fruit fly).